A 184-amino-acid polypeptide reads, in one-letter code: J-type co-chaperone JAC1, mitochondrial (184 aa).

Residues M1–F10 constitute a mitochondrion transit peptide. The region spanning T13–L82 is the J domain. An HSP70 binding motif is present at residues H48–D50. Positions D71–H184 are interaction with ISU1.

The protein belongs to the HscB family. Interacts with ISU1 and SSQ1.

Its subcellular location is the mitochondrion matrix. Its function is as follows. Co-chaperone required for the assembly of iron-sulfur (Fe/S) clusters in mitochondria. Stimulates the ATPase activity of its specialized Hsp70 chaperone partner SSQ1, to mediate the transfer of iron-sulfur clusters from ISU1 to GRX5. Binds to the substrate protein ISU1 and targets it to SSQ1. The polypeptide is J-type co-chaperone JAC1, mitochondrial (Saccharomyces cerevisiae (strain ATCC 204508 / S288c) (Baker's yeast)).